The sequence spans 209 residues: uncharacterized protein (209 aa).

This is an uncharacterized protein from Klebsiella pneumoniae.